The sequence spans 94 residues: Large ribosomal subunit protein uL24c (94 aa).

The protein belongs to the universal ribosomal protein uL24 family. Part of the 50S ribosomal subunit.

The protein resides in the plastid. It localises to the chloroplast. Functionally, one of two assembly initiator proteins, it binds directly to the 5'-end of the 23S rRNA, where it nucleates assembly of the 50S subunit. This chain is Large ribosomal subunit protein uL24c (rpl24), found in Cyanidium caldarium (Red alga).